A 33-amino-acid chain; its full sequence is DAQEXKRVLGQLHGGPFSASAKYFGQAHGGXEK.

Its function is as follows. Suppresses expansion of husk leaf blades. The polypeptide is Suppressor protein HFN40 (Zea mays (Maize)).